A 119-amino-acid chain; its full sequence is Iron-sulfur cluster insertion protein ErpA (119 aa).

Iron-sulfur cluster is bound by residues C47, C111, and C113.

It belongs to the HesB/IscA family. As to quaternary structure, homodimer. Iron-sulfur cluster is required as a cofactor.

Functionally, required for insertion of 4Fe-4S clusters for at least IspG. This is Iron-sulfur cluster insertion protein ErpA from Alcanivorax borkumensis (strain ATCC 700651 / DSM 11573 / NCIMB 13689 / SK2).